Here is a 269-residue protein sequence, read N- to C-terminus: Protein SET (269 aa).

The tract at residues 1–33 is disordered; the sequence is MSSVPKRAKLDGAPADGNTSAAAGNNEEESEAL. Phosphoserine is present on residues Ser-30, Ser-148, and Ser-152. Positions 227-269 are disordered; the sequence is LVPDIEVEPEDEEDNEDNDEEAFDDEDGEDGEGEEEEEDEDDK. Acidic residues predominate over residues 231 to 269; the sequence is IEVEPEDEEDNEDNDEEAFDDEDGEDGEGEEEEEDEDDK.

Belongs to the nucleosome assembly protein (NAP) family. As to quaternary structure, interacts specifically with B-type cyclins.

This chain is Protein SET (Set), found in Drosophila melanogaster (Fruit fly).